Consider the following 464-residue polypeptide: ATP synthase subunit beta (464 aa).

ATP is bound at residue 148 to 155; that stretch reads GGAGVGKT.

The protein belongs to the ATPase alpha/beta chains family. As to quaternary structure, F-type ATPases have 2 components, CF(1) - the catalytic core - and CF(0) - the membrane proton channel. CF(1) has five subunits: alpha(3), beta(3), gamma(1), delta(1), epsilon(1). CF(0) has three main subunits: a(1), b(2) and c(9-12). The alpha and beta chains form an alternating ring which encloses part of the gamma chain. CF(1) is attached to CF(0) by a central stalk formed by the gamma and epsilon chains, while a peripheral stalk is formed by the delta and b chains.

The protein resides in the cell inner membrane. The catalysed reaction is ATP + H2O + 4 H(+)(in) = ADP + phosphate + 5 H(+)(out). Produces ATP from ADP in the presence of a proton gradient across the membrane. The catalytic sites are hosted primarily by the beta subunits. The sequence is that of ATP synthase subunit beta from Acinetobacter baumannii (strain AB0057).